The primary structure comprises 166 residues: ATP synthase subunit b (166 aa).

The helical transmembrane segment at Leu10–Phe30 threads the bilayer.

The protein belongs to the ATPase B chain family. As to quaternary structure, F-type ATPases have 2 components, F(1) - the catalytic core - and F(0) - the membrane proton channel. F(1) has five subunits: alpha(3), beta(3), gamma(1), delta(1), epsilon(1). F(0) has three main subunits: a(1), b(2) and c(10-14). The alpha and beta chains form an alternating ring which encloses part of the gamma chain. F(1) is attached to F(0) by a central stalk formed by the gamma and epsilon chains, while a peripheral stalk is formed by the delta and b chains.

It localises to the cell inner membrane. In terms of biological role, f(1)F(0) ATP synthase produces ATP from ADP in the presence of a proton or sodium gradient. F-type ATPases consist of two structural domains, F(1) containing the extramembraneous catalytic core and F(0) containing the membrane proton channel, linked together by a central stalk and a peripheral stalk. During catalysis, ATP synthesis in the catalytic domain of F(1) is coupled via a rotary mechanism of the central stalk subunits to proton translocation. Component of the F(0) channel, it forms part of the peripheral stalk, linking F(1) to F(0). The chain is ATP synthase subunit b from Parabacteroides distasonis (strain ATCC 8503 / DSM 20701 / CIP 104284 / JCM 5825 / NCTC 11152).